The chain runs to 142 residues: Large ribosomal subunit protein uL11 (142 aa).

This sequence belongs to the universal ribosomal protein uL11 family. As to quaternary structure, part of the ribosomal stalk of the 50S ribosomal subunit. Interacts with L10 and the large rRNA to form the base of the stalk. L10 forms an elongated spine to which L12 dimers bind in a sequential fashion forming a multimeric L10(L12)X complex. In terms of processing, one or more lysine residues are methylated.

Functionally, forms part of the ribosomal stalk which helps the ribosome interact with GTP-bound translation factors. The chain is Large ribosomal subunit protein uL11 from Rhodopseudomonas palustris (strain BisB18).